Here is a 28-residue protein sequence, read N- to C-terminus: MAYRGFKTSRVVKHRVRRRWFNHRRRYR.

This is an uncharacterized protein from Spiroplasma virus 4 (SpV4).